The following is a 168-amino-acid chain: uncharacterized protein (168 aa).

Disordered regions lie at residues 37 to 74, 81 to 100, and 117 to 168; these read GGSK…SQFT, QYNY…PNYY, and MQPF…EETN. Polar residues-rich tracts occupy residues 52–74 and 82–95; these read HSGQ…SQFT and YNYN…TRSV. Positions 120-129 are enriched in low complexity; it reads FNNQSFNNQS. Residues 130–158 show a composition bias toward polar residues; the sequence is RTHQSKTYQHNQQKRSFNGPRNNGPQNNV.

This is an uncharacterized protein from Acanthamoeba polyphaga (Amoeba).